The chain runs to 26 residues: Histone H2B.1, sperm (26 aa).

The tract at residues 1-26 (MPSQKSPTKRSPTKRSPQKGGKGAKR) is disordered. 3 consecutive short sequence motifs (SPKK motif) follow at residues 6–9 (SPTK), 11–14 (SPTK), and 16–19 (SPQK). Basic residues predominate over residues 7 to 26 (PTKRSPTKRSPQKGGKGAKR). Phosphoserine occurs at positions 11 and 16.

It belongs to the histone H2B family. As to quaternary structure, the nucleosome is a histone octamer containing two molecules each of H2A, H2B, H3 and H4 assembled in one H3-H4 heterotetramer and two H2A-H2B heterodimers. The octamer wraps approximately 147 bp of DNA. In terms of processing, monoubiquitination gives a specific tag for epigenetic transcriptional activation and is also prerequisite for histone H3 'Lys-4' and 'Lys-79' methylation. Phosphorylated on SPKK motifs 2 and 3; which may regulate DNA binding. Dephosphorylated during maturation of spermatids to mature sperm and rephosphorylated at fertilization.

The protein resides in the nucleus. It is found in the chromosome. Functionally, core component of nucleosome. Nucleosomes wrap and compact DNA into chromatin, limiting DNA accessibility to the cellular machineries which require DNA as a template. Histones thereby play a central role in transcription regulation, DNA repair, DNA replication and chromosomal stability. DNA accessibility is regulated via a complex set of post-translational modifications of histones, also called histone code, and nucleosome remodeling. The polypeptide is Histone H2B.1, sperm (Echinus esculentus (Sea urchin)).